The following is a 326-amino-acid chain: uncharacterized protein (326 aa).

In terms of domain architecture, S4 RNA-binding spans 15-76; that stretch reads VRIEKFCLKL…IEPYLHNHSE (62 aa). Residue aspartate 147 is part of the active site.

Belongs to the pseudouridine synthase RluA family.

The catalysed reaction is a uridine in RNA = a pseudouridine in RNA. This is an uncharacterized protein from Mycoplasma pneumoniae (strain ATCC 29342 / M129 / Subtype 1) (Mycoplasmoides pneumoniae).